We begin with the raw amino-acid sequence, 634 residues long: MSDAATRTEGTSGGHSSSAVGLMVGAVGVCYGDIGTSPLYTLKEVFIGGYGVQANHDGVLGVLSLIFWSLIWVVSIKYVIFVLRADNQGEGGVMALSALARRAAAPFGRLQTFVVVAGLIGAALFYGDSMITPAISVLSAVEGLEIAFDGLEHWTVPLALIVLIGLFLIQKHGTARIGILFGPVMVLWFGALAALGVYGVIQQPEVLQAMNPVWAVRFFGSHPGIGVAILGATVLALTGAEALYADMGHFGRKPIARAWFLLVLPALVLNYFGQGATILSNAEAARNPFYLLAPGWALLPMVALSTLATVIASQAVISGAFSLTRQAIQLGYVPRMSIQHTSSHEQGQIYIGGVNWALMVGVVLLVLGFESSASLAAAYGVAVTGTMLITTLLMGVVIWRLWKWPLWLGVPFFCVMLAVDSLFFAANVPKVVQGGAFPVIAGIVIFILMSTWKRGRQLLVERLDEGSLPLPVFISSMRVQPPHRVQGTAIFLTARTDAVPHALLHNLLHNQVLHEQVVLLTVVNEDSPRVAPDRRFEVEAYGDGFFRVILHFGFMEEPDIPGALRLCHLNELDFSPMRTTYFLSRETVIPSRRIGMARWREGLFAFLLKNANGNLRYFNLPLNRVIELGTQVEI.

Transmembrane regions (helical) follow at residues 19 to 39 (AVGL…TSPL), 62 to 82 (VLSL…VIFV), 113 to 133 (FVVV…MITP), 150 to 170 (GLEH…FLIQ), 177 to 197 (IGIL…ALGV), 225 to 245 (IGVA…ALYA), 259 to 279 (WFLL…ATIL), 291 to 311 (LLAP…ATVI), 349 to 369 (IYIG…VLGF), 379 to 399 (YGVA…VVIW), 406 to 426 (LWLG…FFAA), and 431 to 451 (VVQG…LMST).

This sequence belongs to the HAK/KUP transporter (TC 2.A.72) family.

Its subcellular location is the cell inner membrane. It catalyses the reaction K(+)(in) + H(+)(in) = K(+)(out) + H(+)(out). Transport of potassium into the cell. Likely operates as a K(+):H(+) symporter. This Pseudomonas paraeruginosa (strain DSM 24068 / PA7) (Pseudomonas aeruginosa (strain PA7)) protein is Probable potassium transport system protein Kup.